The following is a 625-amino-acid chain: ATP-dependent RNA helicase DBP9 (625 aa).

The disordered stretch occupies residues 1-21 (MKRKLDANNVPSPEDSAGKSI). Residues 24–52 (HSFETLKLDPRLLQALTQQKFTKPTPIQA) carry the Q motif motif. Residues 55–233 (IPLALDGKDV…GLFCRNPVVL (179 aa)) form the Helicase ATP-binding domain. 68-75 (AKTGSGKT) serves as a coordination point for ATP. Residues 181–184 (DEAD) carry the DEAD box motif. One can recognise a Helicase C-terminal domain in the interval 260–485 (LLTYVIFKLQ…EVKPYHFDMK (226 aa)). Disordered regions lie at residues 339–393 (RKNS…EKDY) and 590–625 (IRKA…GGKH). Residues 347–357 (RKSDQCSRDSE) show a composition bias toward basic and acidic residues. The segment covering 361-370 (AQTSRNNDQY) has biased composition (polar residues). Residues 599–610 (GRGRGGKAGRGG) show a composition bias toward basic residues.

The protein belongs to the DEAD box helicase family. DDX56/DBP9 subfamily.

Its subcellular location is the nucleus. It localises to the nucleolus. It catalyses the reaction ATP + H2O = ADP + phosphate + H(+). In terms of biological role, ATP-binding RNA helicase involved in the biogenesis of 60S ribosomal subunits and is required for the normal formation of 25S and 5.8S rRNAs. The polypeptide is ATP-dependent RNA helicase DBP9 (DBP9) (Ajellomyces capsulatus (strain NAm1 / WU24) (Darling's disease fungus)).